A 350-amino-acid polypeptide reads, in one-letter code: Carbamoyl dehydratase HypE (350 aa).

Cys350 carries the post-translational modification S-carbamoylcysteine. Cys350 carries the post-translational modification S-cyanocysteine.

This sequence belongs to the HypE family. Post-translationally, modified by HypF, which adds a carboxamido group to the thiolate of the C-terminal cysteine, yielding a protein-S-carboxamide. The carboxamido group is then dehydrated by HypE itself to yield a protein-thiocyanate.

It carries out the reaction C-terminal S-carboxamide-L-cysteinyl-[HypE protein] + ATP = C-terminal S-cyanate-L-cysteinyl-[HypE protein] + ADP + phosphate + H(+). It participates in protein modification; [NiFe] hydrogenase maturation. Its function is as follows. Involved in the maturation of [NiFe] hydrogenases. Along with HypF, it catalyzes the synthesis of the CN ligands of the active site iron of [NiFe]-hydrogenases. HypE catalyzes the ATP-dependent dehydration of the carboxamido group attached to its C-terminal cysteine to a cyano group. This Rhizobium leguminosarum bv. viciae protein is Carbamoyl dehydratase HypE.